The primary structure comprises 256 residues: Undecaprenyl-diphosphatase (256 aa).

A run of 7 helical transmembrane segments spans residues 1-21 (MDIF…FLPV), 41-61 (FHKT…LALF), 69-89 (VDIW…GFLL), 96-116 (LFAP…FLVL), 172-192 (VAAE…TGYD), 207-227 (ALGV…KGFL), and 233-253 (FNFV…LFYL).

This sequence belongs to the UppP family.

It is found in the cell inner membrane. The catalysed reaction is di-trans,octa-cis-undecaprenyl diphosphate + H2O = di-trans,octa-cis-undecaprenyl phosphate + phosphate + H(+). In terms of biological role, catalyzes the dephosphorylation of undecaprenyl diphosphate (UPP). Confers resistance to bacitracin. This chain is Undecaprenyl-diphosphatase, found in Wolinella succinogenes (strain ATCC 29543 / DSM 1740 / CCUG 13145 / JCM 31913 / LMG 7466 / NCTC 11488 / FDC 602W) (Vibrio succinogenes).